The chain runs to 180 residues: Chromosome-anchoring protein RacA (180 aa).

Positions 5-25 form a DNA-binding region, H-T-H motif; that stretch reads TPFIAKKLGVSPKAVVRIAQQ. The stretch at 67-151 forms a coiled coil; sequence KASSNEVEEL…LEAALTKEEP (85 aa).

It belongs to the RacA family.

The protein resides in the cytoplasm. Its function is as follows. Required for the formation of axial filaments and for anchoring the origin regions at the cell poles in sporulating cells, thus ensuring proper chromosome segregation in the prespore. Binds in a dispersed manner throughout the chromosome but preferentially to sites clustered in the origin portion of the chromosome, causing condensation of the chromosome and its remodeling into an elongated, anchored structure. The sequence is that of Chromosome-anchoring protein RacA from Bacillus cereus (strain B4264).